The primary structure comprises 270 residues: Protein-ADP-ribose hydrolase (270 aa).

Positions 73–267 (VSVKDCQKTN…LYDTYLQKEN (195 aa)) constitute a Macro domain. The ADP-D-ribose site is built by Asp-92, Ile-93, and Asn-106. Residues Cys-112, His-117, and Cys-119 each coordinate Zn(2+). Residues Cys-119, Ile-120, Asp-121, Ser-212, Thr-213, Gly-214, Glu-215, and Phe-216 each contribute to the ADP-D-ribose site.

The protein belongs to the MacroD-type family. Zn-Macro subfamily. Zn(2+) is required as a cofactor.

The enzyme catalyses 4-O-(ADP-D-ribosyl)-L-aspartyl-[protein] + H2O = L-aspartyl-[protein] + ADP-D-ribose + H(+). ADP-ribosylhydrolase that specifically reverses the SirTM-mediated mono-ADP-ribosylation at an asparatate residue of GcvH-L, by releasing ADP-ribose from the target protein. May play a role in the regulation of the response to host-induced oxidative stress. In Streptococcus pyogenes serotype M3 (strain ATCC BAA-595 / MGAS315), this protein is Protein-ADP-ribose hydrolase.